Here is a 348-residue protein sequence, read N- to C-terminus: Rhodopsin (348 aa).

Met-1 carries the post-translational modification N-acetylmethionine. The Extracellular segment spans residues Met-1–Gln-36. Asn-2 and Asn-15 each carry an N-linked (GlcNAc...) asparagine glycan. Residues Phe-37–Val-61 form a helical membrane-spanning segment. The Cytoplasmic portion of the chain corresponds to Thr-62–Asn-73. Residues Tyr-74–Tyr-96 form a helical membrane-spanning segment. The Extracellular segment spans residues Thr-97–Cys-110. Residues Cys-110 and Cys-187 are joined by a disulfide bond. The helical transmembrane segment at Asn-111–Ile-133 threads the bilayer. The short motif at Glu-134–Tyr-136 is the 'Ionic lock' involved in activated form stabilization element. Residues Glu-134–His-152 are Cytoplasmic-facing. A helical membrane pass occupies residues Ala-153–Ala-173. The Extracellular segment spans residues Gly-174–Ser-202. Residue Glu-201 coordinates Zn(2+). Residues Phe-203–Gly-224 form a helical membrane-spanning segment. Over Gln-225–Arg-252 the chain is Cytoplasmic. Residues Met-253–Tyr-274 traverse the membrane as a helical segment. The Extracellular portion of the chain corresponds to Ile-275–Ile-286. Gln-279 is a Zn(2+) binding site. A helical membrane pass occupies residues Phe-287–Met-308. N6-(retinylidene)lysine is present on Lys-296. Topologically, residues Met-309–Ala-348 are cytoplasmic. 2 S-palmitoyl cysteine lipidation sites follow: Cys-322 and Cys-323. An interaction with SAG region spans residues Asp-330–Ala-348. Phosphoserine is present on residues Ser-334 and Ser-338. Phosphothreonine occurs at positions 340 and 342. At Ser-343 the chain carries Phosphoserine.

Belongs to the G-protein coupled receptor 1 family. Opsin subfamily. In terms of assembly, homodimer. May form a complex composed of RHO, GRK1 and RCVRN in a Ca(2+)-dependent manner; RCVRN prevents the interaction between GRK1 and RHO. Interacts with GRK1. Interacts (phosphorylated form) with SAG. Interacts with GNAT1. Interacts with GNAT3. SAG and G-proteins compete for a common binding site. Interacts with PRCD; the interaction promotes PRCD stability. Forms a complex with ASAP1 and ARF4. Forms a complex with ASAP1, RAB11A, Rabin8/RAB3IP, ARF4 and RAB11FIP3; the complex regulates Golgi-to-cilia rhodopsin/RHO transport in photoreceptors. Post-translationally, phosphorylated on some or all of the serine and threonine residues present in the C-terminal region. In terms of processing, contains one covalently linked retinal chromophore. Upon light absorption, the covalently bound 11-cis-retinal is converted to all-trans-retinal. After hydrolysis of the Schiff base and release of the covalently bound all-trans-retinal, active rhodopsin is regenerated by binding of a fresh molecule of 11-cis-retinal.

The protein localises to the membrane. The protein resides in the cell projection. It is found in the cilium. It localises to the photoreceptor outer segment. Functionally, photoreceptor required for image-forming vision at low light intensity. Required for photoreceptor cell viability after birth. Light-induced isomerization of 11-cis to all-trans retinal triggers a conformational change that activates signaling via G-proteins. Subsequent receptor phosphorylation mediates displacement of the bound G-protein alpha subunit by the arrestin SAG and terminates signaling. In Canis lupus familiaris (Dog), this protein is Rhodopsin (RHO).